A 252-amino-acid chain; its full sequence is Large ribosomal subunit protein uL29m (252 aa).

Lys-146 is modified (N6-acetyllysine).

It belongs to the universal ribosomal protein uL29 family. Component of the mitochondrial ribosome large subunit (39S) which comprises a 16S rRNA and about 50 distinct proteins.

The protein localises to the mitochondrion. In Bos taurus (Bovine), this protein is Large ribosomal subunit protein uL29m (MRPL47).